Here is a 921-residue protein sequence, read N- to C-terminus: DNA mismatch repair protein MutS 1 (921 aa).

An ATP-binding site is contributed by 619–626 (GPNMSGKS). Residues 837–887 (FRDGAAQSGGAAAGSTAEPVATDGDPEHAPGEAAAEGPKGDERAASLDSET) form a disordered region. Residues 840-853 (GAAQSGGAAAGSTA) show a composition bias toward low complexity.

Belongs to the DNA mismatch repair MutS family.

Functionally, this protein is involved in the repair of mismatches in DNA. It is possible that it carries out the mismatch recognition step. This protein has a weak ATPase activity. The chain is DNA mismatch repair protein MutS 1 from Haloarcula marismortui (strain ATCC 43049 / DSM 3752 / JCM 8966 / VKM B-1809) (Halobacterium marismortui).